The following is a 101-amino-acid chain: Protein snet-1 (101 aa).

A signal peptide spans 1 to 20; sequence MARFTPLLMILLALVPLYYS.

In terms of processing, may be degraded by the nep-2 peptidase. Expressed in coelomocytes, the ASK sensory neurons and interneurons AIB, AIM and PVQ.

It is found in the secreted. It localises to the perikaryon. In terms of biological role, negatively regulates chemotaxis and olfactory plasticity which is the change from positive chemotaxis to dispersal after prolonged exposure to an odorant. May be down-regulated in response to pheromone exposure, resulting in promotion of olfactory plasticity. The protein is Protein snet-1 of Caenorhabditis elegans.